The primary structure comprises 321 residues: tRNA U34 carboxymethyltransferase (321 aa).

Residues Lys-90, Trp-104, Lys-109, Gly-129, 151-153 (DPT), 180-181 (IE), Met-195, Tyr-199, and Arg-314 each bind carboxy-S-adenosyl-L-methionine.

This sequence belongs to the class I-like SAM-binding methyltransferase superfamily. CmoB family. As to quaternary structure, homotetramer.

The enzyme catalyses carboxy-S-adenosyl-L-methionine + 5-hydroxyuridine(34) in tRNA = 5-carboxymethoxyuridine(34) in tRNA + S-adenosyl-L-homocysteine + H(+). Catalyzes carboxymethyl transfer from carboxy-S-adenosyl-L-methionine (Cx-SAM) to 5-hydroxyuridine (ho5U) to form 5-carboxymethoxyuridine (cmo5U) at position 34 in tRNAs. The polypeptide is tRNA U34 carboxymethyltransferase (Haemophilus influenzae (strain 86-028NP)).